A 244-amino-acid polypeptide reads, in one-letter code: Type III pantothenate kinase (244 aa).

ATP is bound at residue 12 to 19 (VVGNTHVR). Substrate is bound by residues Y79 and 83–86 (GLDR). D85 acts as the Proton acceptor in catalysis. D105 is a binding site for K(+). T108 contacts ATP. Residue T163 coordinates substrate.

This sequence belongs to the type III pantothenate kinase family. As to quaternary structure, homodimer. Requires NH4(+) as cofactor. The cofactor is K(+).

It is found in the cytoplasm. The catalysed reaction is (R)-pantothenate + ATP = (R)-4'-phosphopantothenate + ADP + H(+). The protein operates within cofactor biosynthesis; coenzyme A biosynthesis; CoA from (R)-pantothenate: step 1/5. In terms of biological role, catalyzes the phosphorylation of pantothenate (Pan), the first step in CoA biosynthesis. The chain is Type III pantothenate kinase from Synechococcus sp. (strain JA-3-3Ab) (Cyanobacteria bacterium Yellowstone A-Prime).